Reading from the N-terminus, the 461-residue chain is Asparagine--tRNA ligase (461 aa).

The protein belongs to the class-II aminoacyl-tRNA synthetase family. As to quaternary structure, homodimer.

Its subcellular location is the cytoplasm. It carries out the reaction tRNA(Asn) + L-asparagine + ATP = L-asparaginyl-tRNA(Asn) + AMP + diphosphate + H(+). This Geotalea uraniireducens (strain Rf4) (Geobacter uraniireducens) protein is Asparagine--tRNA ligase.